A 92-amino-acid polypeptide reads, in one-letter code: Large ribosomal subunit protein bL25 (92 aa).

This sequence belongs to the bacterial ribosomal protein bL25 family. As to quaternary structure, part of the 50S ribosomal subunit; part of the 5S rRNA/L5/L18/L25 subcomplex. Contacts the 5S rRNA. Binds to the 5S rRNA independently of L5 and L18.

In terms of biological role, this is one of the proteins that binds to the 5S RNA in the ribosome where it forms part of the central protuberance. This chain is Large ribosomal subunit protein bL25, found in Vibrio vulnificus (strain CMCP6).